A 481-amino-acid polypeptide reads, in one-letter code: Glutamate--glyoxylate aminotransferase 2 (481 aa).

The residue at position 291 (Lys291) is an N6-(pyridoxal phosphate)lysine. Residues 479–481 (SRM) carry the Peroxisomal targeting signal motif.

It belongs to the class-I pyridoxal-phosphate-dependent aminotransferase family. Alanine aminotransferase subfamily. Homodimer. It depends on pyridoxal 5'-phosphate as a cofactor. Post-translationally, the N-terminus is blocked. As to expression, expressed at low levels in seedlings, leaves, flowers, roots, and green siliques.

Its subcellular location is the peroxisome. It carries out the reaction L-alanine + 2-oxoglutarate = pyruvate + L-glutamate. The catalysed reaction is glyoxylate + L-alanine = glycine + pyruvate. It catalyses the reaction glycine + 2-oxoglutarate = glyoxylate + L-glutamate. It participates in photosynthesis; C4 acid pathway. The protein operates within amino-acid degradation; L-alanine degradation via transaminase pathway; pyruvate from L-alanine: step 1/1. In terms of biological role, catalyzes the Glu:glyoxylate aminotransferase (GGT), Ala:glyoxylate aminotransferase (AGT), Ala:2-oxoglutarate aminotransferase (AKT) and Glu:pyruvate aminotransferase (GPT) reactions in peroxisomes. This is Glutamate--glyoxylate aminotransferase 2 (GGAT2) from Arabidopsis thaliana (Mouse-ear cress).